The sequence spans 430 residues: UPF0597 protein DSY1109 (430 aa).

This sequence belongs to the UPF0597 family.

The protein is UPF0597 protein DSY1109 of Desulfitobacterium hafniense (strain Y51).